A 173-amino-acid polypeptide reads, in one-letter code: Adenine phosphoribosyltransferase (173 aa).

This sequence belongs to the purine/pyrimidine phosphoribosyltransferase family. As to quaternary structure, homodimer.

The protein resides in the cytoplasm. It carries out the reaction AMP + diphosphate = 5-phospho-alpha-D-ribose 1-diphosphate + adenine. It participates in purine metabolism; AMP biosynthesis via salvage pathway; AMP from adenine: step 1/1. In terms of biological role, catalyzes a salvage reaction resulting in the formation of AMP, that is energically less costly than de novo synthesis. The protein is Adenine phosphoribosyltransferase of Caldanaerobacter subterraneus subsp. tengcongensis (strain DSM 15242 / JCM 11007 / NBRC 100824 / MB4) (Thermoanaerobacter tengcongensis).